Here is a 515-residue protein sequence, read N- to C-terminus: MPKERRSRRRPQPIIRWVSLTLTLLALCRPIQTWRCSLSLGNQQWMTAYNQEAKFSISIDQILEAHNQSPFCAKSPRYTLDSVNGYPKIYWPPPQGRRRFGARAMVTYDCEPRCPYVGADRFDCPHWDNASQADQGSFYVNHQILFLHLKQCHGIFTLTWEIWGYDPLITFSLHKIPDPPQPDFPQLNSDWVPSVRSWALLLNQTARAFPDCAICWEPSPPWAPEILVYNKTISSSGPGLALPDAQIFWVNSSSFNTTQGWHHPSQRLLFNVSQGNALLLPPISLVNLSTASSAPPTRVRRSPVAALTLGLALSVGLTGINVAVSALSHQRLTSLIHVLEQDQQRLITAINQTHYNLLNVASVVAQNRRGLDWLYIRLGFQSLCPTINEPCCFLRIQNDSIILRGDLQPLSQRVSTDWQWPWNWDLGLTAWVRETIHSVLSLFLLALFLLFLAPCLIKCLTSRLLKLLRQAPHFPEISLTPKPDSDYQALLPSAPEIYSHLSPVKPDYINLRPCP.

The first 33 residues, 1-33 (MPKERRSRRRPQPIIRWVSLTLTLLALCRPIQT), serve as a signal peptide directing secretion. Residues 34–435 (WRCSLSLGNQ…LGLTAWVRET (402 aa)) lie on the Extracellular side of the membrane. N-linked (GlcNAc...) asparagine; by host glycosylation is found at N129 and N203. Positions 212-215 (CAIC) match the CXXC motif. Disulfide bonds link C212–C215, C212–C392, and C384–C391. 5 N-linked (GlcNAc...) asparagine; by host glycosylation sites follow: N230, N251, N256, N271, and N287. Positions 304–324 (VAALTLGLALSVGLTGINVAV) are fusion peptide. Coiled-coil stretches lie at residues 330-376 (QRLT…WLYI) and 388-420 (NEPC…DWQW). The N-linked (GlcNAc...) asparagine; by host glycan is linked to N351. Residues 365–381 (AQNRRGLDWLYIRLGFQ) are immunosuppression. The CX6CC motif lies at 384–392 (CPTINEPCC). N398 is a glycosylation site (N-linked (GlcNAc...) asparagine; by host). Residues 436-456 (IHSVLSLFLLALFLLFLAPCL) form a helical membrane-spanning segment. The S-palmitoyl cysteine; by host moiety is linked to residue C455. The Cytoplasmic segment spans residues 457–515 (IKCLTSRLLKLLRQAPHFPEISLTPKPDSDYQALLPSAPEIYSHLSPVKPDYINLRPCP).

In terms of assembly, the mature envelope protein (Env) consists of a trimer of SU-TM heterodimers attached by a labile interchain disulfide bond. Post-translationally, specific enzymatic cleavages in vivo yield mature proteins. Envelope glycoproteins are synthesized as an inactive precursor that is N-glycosylated and processed likely by host cell furin or by a furin-like protease in the Golgi to yield the mature SU and TM proteins. The cleavage site between SU and TM requires the minimal sequence [KR]-X-[KR]-R. In terms of processing, the CXXC motif is highly conserved across a broad range of retroviral envelope proteins. It is thought to participate in the formation of a labile disulfide bond possibly with the CX6CC motif present in the transmembrane protein. Isomerization of the intersubunit disulfide bond to an SU intrachain disulfide bond is thought to occur upon receptor recognition in order to allow membrane fusion. The transmembrane protein is palmitoylated.

The protein localises to the virion membrane. It localises to the host cell membrane. Functionally, the surface protein (SU) attaches the virus to the host cell by binding to its receptor. This interaction triggers the refolding of the transmembrane protein (TM) and is thought to activate its fusogenic potential by unmasking its fusion peptide. Fusion occurs at the host cell plasma membrane. In terms of biological role, the transmembrane protein (TM) acts as a class I viral fusion protein. Under the current model, the protein has at least 3 conformational states: pre-fusion native state, pre-hairpin intermediate state, and post-fusion hairpin state. During viral and target cell membrane fusion, the coiled coil regions (heptad repeats) assume a trimer-of-hairpins structure, positioning the fusion peptide in close proximity to the C-terminal region of the ectodomain. The formation of this structure appears to drive apposition and subsequent fusion of viral and target cell membranes. Membranes fusion leads to delivery of the nucleocapsid into the cytoplasm. The protein is Envelope glycoprotein (env) of Bos taurus (Bovine).